Consider the following 608-residue polypeptide: uncharacterized protein (608 aa).

Residues 1–21 form a disordered region; sequence MHTNSPLRADNQDLETQPLLR. A Phosphothreonine modification is found at T24. A Phosphoserine modification is found at S27. Residues 55–75 traverse the membrane as a helical segment; sequence IIYLLGIVLLSFFGVSIVQYI. N-linked (GlcNAc...) asparagine glycosylation is found at N115, N141, N169, N407, N425, N449, N453, N527, and N580.

The protein resides in the membrane. This is an uncharacterized protein from Saccharomyces cerevisiae (strain ATCC 204508 / S288c) (Baker's yeast).